Here is a 247-residue protein sequence, read N- to C-terminus: UDP-2,3-diacylglucosamine hydrolase (247 aa).

Mn(2+) contacts are provided by Asp-8, His-10, Asp-41, Asn-79, and His-114. Position 79–80 (Asn-79–Arg-80) interacts with substrate. 5 residues coordinate substrate: Asp-122, Ser-160, Asp-171, Arg-174, and His-202. Positions 202 and 204 each coordinate Mn(2+).

It belongs to the LpxH family. The cofactor is Mn(2+).

Its subcellular location is the cell inner membrane. The catalysed reaction is UDP-2-N,3-O-bis[(3R)-3-hydroxytetradecanoyl]-alpha-D-glucosamine + H2O = 2-N,3-O-bis[(3R)-3-hydroxytetradecanoyl]-alpha-D-glucosaminyl 1-phosphate + UMP + 2 H(+). The protein operates within glycolipid biosynthesis; lipid IV(A) biosynthesis; lipid IV(A) from (3R)-3-hydroxytetradecanoyl-[acyl-carrier-protein] and UDP-N-acetyl-alpha-D-glucosamine: step 4/6. Hydrolyzes the pyrophosphate bond of UDP-2,3-diacylglucosamine to yield 2,3-diacylglucosamine 1-phosphate (lipid X) and UMP by catalyzing the attack of water at the alpha-P atom. Involved in the biosynthesis of lipid A, a phosphorylated glycolipid that anchors the lipopolysaccharide to the outer membrane of the cell. The sequence is that of UDP-2,3-diacylglucosamine hydrolase from Xanthomonas axonopodis pv. citri (strain 306).